A 260-amino-acid chain; its full sequence is uncharacterized protein (260 aa).

The N-terminal stretch at 1–22 (MGYSKRFALYISILILIVMVAG) is a signal peptide. Cys23 carries the N-palmitoyl cysteine lipid modification. Cys23 carries S-diacylglycerol cysteine lipidation.

It belongs to the staphylococcal tandem lipoprotein family.

Its subcellular location is the cell membrane. This is an uncharacterized protein from Staphylococcus aureus (strain N315).